Consider the following 120-residue polypeptide: Large ribosomal subunit protein eL34 (120 aa).

The protein belongs to the eukaryotic ribosomal protein eL34 family.

The chain is Large ribosomal subunit protein eL34 (RPL34) from Pisum sativum (Garden pea).